Consider the following 239-residue polypeptide: Small ribosomal subunit protein uS3 (239 aa).

The KH type-2 domain maps to 39 to 107 (VRQVLRKKMS…SVHINVIEVR (69 aa)). Positions 217–239 (KQDDISRGDRNADRSSRRSREVR) are disordered.

The protein belongs to the universal ribosomal protein uS3 family. As to quaternary structure, part of the 30S ribosomal subunit. Forms a tight complex with proteins S10 and S14.

Functionally, binds the lower part of the 30S subunit head. Binds mRNA in the 70S ribosome, positioning it for translation. The chain is Small ribosomal subunit protein uS3 from Xylella fastidiosa (strain 9a5c).